We begin with the raw amino-acid sequence, 179 residues long: MAKLHDYYKSSVVAELTKEFSYTSVMQVPRIEKITLNMGVGEAINDKKLLENAASDMATISGQKPLITKARKSVAGFKIREGYPIGCKVTLRGERMWEFLERLISIALPRVRDFRGVSAKSFDGRGNYSMGVREQIIFPEIDYDKVDRVRGLDITITTSAGSDEEGRALLAAFNFPFRK.

It belongs to the universal ribosomal protein uL5 family. As to quaternary structure, part of the 50S ribosomal subunit; part of the 5S rRNA/L5/L18/L25 subcomplex. Contacts the 5S rRNA and the P site tRNA. Forms a bridge to the 30S subunit in the 70S ribosome.

Its function is as follows. This is one of the proteins that bind and probably mediate the attachment of the 5S RNA into the large ribosomal subunit, where it forms part of the central protuberance. In the 70S ribosome it contacts protein S13 of the 30S subunit (bridge B1b), connecting the 2 subunits; this bridge is implicated in subunit movement. Contacts the P site tRNA; the 5S rRNA and some of its associated proteins might help stabilize positioning of ribosome-bound tRNAs. This chain is Large ribosomal subunit protein uL5, found in Vibrio atlanticus (strain LGP32) (Vibrio splendidus (strain Mel32)).